The primary structure comprises 544 residues: Cytochrome P450 82A1 (544 aa).

Heme is bound at residue cysteine 481.

It belongs to the cytochrome P450 family. Heme is required as a cofactor.

Its subcellular location is the membrane. This is Cytochrome P450 82A1 (CYP82A1) from Pisum sativum (Garden pea).